We begin with the raw amino-acid sequence, 880 residues long: Protein translocase subunit SecA (880 aa).

Residues Gln-87, 105–109 (GEGKT), and Asp-501 each bind ATP. Residues Cys-864, Cys-866, Cys-875, and His-876 each contribute to the Zn(2+) site.

It belongs to the SecA family. In terms of assembly, monomer and homodimer. Part of the essential Sec protein translocation apparatus which comprises SecA, SecYEG and auxiliary proteins SecDF-YajC and YidC. Zn(2+) serves as cofactor.

Its subcellular location is the cell inner membrane. It localises to the cytoplasm. The enzyme catalyses ATP + H2O + cellular proteinSide 1 = ADP + phosphate + cellular proteinSide 2.. Part of the Sec protein translocase complex. Interacts with the SecYEG preprotein conducting channel. Has a central role in coupling the hydrolysis of ATP to the transfer of proteins into and across the cell membrane, serving both as a receptor for the preprotein-SecB complex and as an ATP-driven molecular motor driving the stepwise translocation of polypeptide chains across the membrane. In Orientia tsutsugamushi (strain Boryong) (Rickettsia tsutsugamushi), this protein is Protein translocase subunit SecA.